Consider the following 57-residue polypeptide: UPF0391 membrane protein RPD_2934 (57 aa).

The next 2 helical transmembrane spans lie at 6 to 26 (WALI…TGVS) and 35 to 55 (ILFY…FTIF).

Belongs to the UPF0391 family.

Its subcellular location is the cell membrane. The polypeptide is UPF0391 membrane protein RPD_2934 (Rhodopseudomonas palustris (strain BisB5)).